The primary structure comprises 207 residues: MFKLLQIDSSPMGDASISRRLTQEYARNWLRAHPDGRVVERDLCRIAMPPIDAAWIAANFTPPDRRTAQQNEMLALSTTFTTELRDADEYVIGVPMHNWGPSAHFKLWLDHIVRQGETVETTPSGPRGLLGGRRATFVIAAGWRYGPDAERAQRNFLEPWLRTLFGFLGVEDMRFVMADGAADVFTGKADSAVFLAPHVDAVRALFA.

Residues Ser-10 and 16–18 (SIS) contribute to the FMN site.

This sequence belongs to the azoreductase type 1 family. Homodimer. Requires FMN as cofactor.

It catalyses the reaction 2 a quinone + NADH + H(+) = 2 a 1,4-benzosemiquinone + NAD(+). It carries out the reaction N,N-dimethyl-1,4-phenylenediamine + anthranilate + 2 NAD(+) = 2-(4-dimethylaminophenyl)diazenylbenzoate + 2 NADH + 2 H(+). In terms of biological role, quinone reductase that provides resistance to thiol-specific stress caused by electrophilic quinones. Also exhibits azoreductase activity. Catalyzes the reductive cleavage of the azo bond in aromatic azo compounds to the corresponding amines. The polypeptide is FMN-dependent NADH:quinone oxidoreductase 3 (Burkholderia lata (strain ATCC 17760 / DSM 23089 / LMG 22485 / NCIMB 9086 / R18194 / 383)).